A 25-amino-acid chain; its full sequence is Unknown protein 4 (25 aa).

Residues 1–10 (IEHNAEEIRK) show a composition bias toward basic and acidic residues. A disordered region spans residues 1 to 25 (IEHNAEEIRKTAIRTAVQNTAQQTK). The span at 16–25 (AVQNTAQQTK) shows a compositional bias: polar residues.

The sequence is that of Unknown protein 4 from Lonomia obliqua (Moth).